The primary structure comprises 434 residues: Alpha-enolase (434 aa).

Serine 40 contacts Mg(2+). Residues histidine 158 and glutamate 167 each contribute to the substrate site. Glutamate 210 functions as the Proton donor in the catalytic mechanism. Positions 245, 293, and 318 each coordinate Mg(2+). Substrate contacts are provided by glutamate 293 and aspartate 318. The active-site Proton acceptor is lysine 343. Substrate contacts are provided by residues 370 to 373 (SHRS) and lysine 394.

This sequence belongs to the enolase family. As to quaternary structure, homodimer. It depends on Mg(2+) as a cofactor.

Its subcellular location is the cytoplasm. The catalysed reaction is (2R)-2-phosphoglycerate = phosphoenolpyruvate + H2O. It participates in carbohydrate degradation; glycolysis; pyruvate from D-glyceraldehyde 3-phosphate: step 4/5. The chain is Alpha-enolase from Python regius (Ball python).